The following is a 544-amino-acid chain: 4-coumarate--CoA ligase 2 (544 aa).

ATP contacts are provided by Ser-190, Ser-191, Gly-192, Thr-193, Thr-194, and Lys-198. Tyr-240 serves as a coordination point for (E)-4-coumaroyl-AMP. Lys-261 provides a ligand contact to CoA. The interval 263–332 is SBD1; it reads DIVPFLELIQ…AKFPNAKLGQ (70 aa). 5 residues coordinate (E)-4-coumaroyl-AMP: Ala-310, Gln-332, Gly-333, Thr-337, and Met-345. 3 residues coordinate ATP: Gln-332, Gly-333, and Thr-337. The segment at 333–400 is SBD2; it reads GYGMTEAGPV…IRGDQIMKGY (68 aa). Asp-421 and Arg-436 together coordinate ATP. The (E)-4-coumaroyl-AMP site is built by Lys-438 and Lys-442. 2 residues coordinate CoA: Lys-444 and Gly-445. Position 527 (Lys-527) interacts with ATP.

This sequence belongs to the ATP-dependent AMP-binding enzyme family. The cofactor is Mg(2+).

It carries out the reaction (E)-4-coumarate + ATP + CoA = (E)-4-coumaroyl-CoA + AMP + diphosphate. It catalyses the reaction (E)-4-coumarate + ATP + H(+) = (E)-4-coumaroyl-AMP + diphosphate. The enzyme catalyses (E)-4-coumaroyl-AMP + CoA = (E)-4-coumaroyl-CoA + AMP + H(+). The protein operates within phytoalexin biosynthesis; 3,4',5-trihydroxystilbene biosynthesis; 3,4',5-trihydroxystilbene from trans-4-coumarate: step 1/2. Its function is as follows. Carboxylate--CoA ligase that may use 4-coumarate as substrate. Follows a two-step reaction mechanism, wherein the carboxylate substrate first undergoes adenylation by ATP, followed by a thioesterification in the presence of CoA to yield the final CoA thioester. The polypeptide is 4-coumarate--CoA ligase 2 (4CL2) (Petroselinum crispum (Parsley)).